The following is a 266-amino-acid chain: 3-methyl-2-oxobutanoate hydroxymethyltransferase (266 aa).

Residues D45 and D84 each coordinate Mg(2+). 3-methyl-2-oxobutanoate is bound by residues 45–46 (DS), D84, and K112. E114 is a Mg(2+) binding site. The active-site Proton acceptor is the E181.

It belongs to the PanB family. Homodecamer; pentamer of dimers. Mg(2+) is required as a cofactor.

Its subcellular location is the cytoplasm. The catalysed reaction is 3-methyl-2-oxobutanoate + (6R)-5,10-methylene-5,6,7,8-tetrahydrofolate + H2O = 2-dehydropantoate + (6S)-5,6,7,8-tetrahydrofolate. The protein operates within cofactor biosynthesis; (R)-pantothenate biosynthesis; (R)-pantoate from 3-methyl-2-oxobutanoate: step 1/2. Catalyzes the reversible reaction in which hydroxymethyl group from 5,10-methylenetetrahydrofolate is transferred onto alpha-ketoisovalerate to form ketopantoate. The sequence is that of 3-methyl-2-oxobutanoate hydroxymethyltransferase from Stutzerimonas stutzeri (strain A1501) (Pseudomonas stutzeri).